We begin with the raw amino-acid sequence, 61 residues long: UPF0434 protein Bfl377 (61 aa).

Belongs to the UPF0434 family.

In Blochmanniella floridana, this protein is UPF0434 protein Bfl377.